Consider the following 672-residue polypeptide: Acetoacetyl-CoA synthetase (672 aa).

It belongs to the ATP-dependent AMP-binding enzyme family. In terms of tissue distribution, abundant in male subcutaneous white adipose tissue after weaning. In white adipose tissue, it is preferentially detected in mature adipocytes but not in preadipocytes. The expression in primary preadipocytes increases during the adipocyte differentiation. In brain, it is expressed in the midbrain, pons/medulla, cerebral cortex, hippocampus and cerebellum. The expression in the cerebellum is restricted primarily to glial cells, while in the cerebral cortex, it is restricted to neuronal cells.

The protein localises to the cytoplasm. The protein resides in the cytosol. The enzyme catalyses acetoacetate + ATP + CoA = acetoacetyl-CoA + AMP + diphosphate. Converts acetoacetate to acetoacetyl-CoA in the cytosol. Ketone body-utilizing enzyme, responsible for the synthesis of cholesterol and fatty acids. This chain is Acetoacetyl-CoA synthetase (Aacs), found in Rattus norvegicus (Rat).